The primary structure comprises 455 residues: Putative O-acetyltransferase SAT14 (455 aa).

It belongs to the lysine N-acyltransferase MbtK family.

The protein operates within mycotoxin biosynthesis. Putative O-acetyltransferase; part of the satratoxin SC2 cluster involved in the biosynthesis of satratoxins, trichothecene mycotoxins that are associated with human food poisonings. Satratoxins are suggested to be made by products of multiple gene clusters (SC1, SC2 and SC3) that encode 21 proteins in all, including polyketide synthases, acetyltransferases, and other enzymes expected to modify the trichothecene skeleton. SC1 encodes 10 proteins, SAT1 to SAT10. The largest are SAT8, which encodes a putative polyketide synthase (PKS) with a conventional non-reducing architecture, and SAT10, a putative protein containing four ankyrin repeats and thus may be involved in protein scaffolding. The putative short-chain reductase SAT3 may assist the PKS in some capacity. SAT6 contains a secretory lipase domain and acts probably as a trichothecene esterase. SAT5 encodes a putative acetyltransferase, and so, with SAT6, may affect endogenous protection from toxicity. The probable transcription factor SAT9 may regulate the expression of the SC1 cluster. SC2 encodes proteins SAT11 to SAT16, the largest of which encodes the putative reducing PKS SAT13. SAT11 is a cytochrome P450 monooxygenase, while SAT14 and SAT16 are probable acetyltransferases. The SC2 cluster may be regulated by the transcription factor SAT15. SC3 is a small cluster that encodes 5 proteins, SAT17 to SAT21. SAT21 is a putative MFS-type transporter which may have a role in exporting secondary metabolites. The four other proteins putatively encoded in SC3 include the taurine hydroxylase-like protein SAT17, the O-methyltransferase SAT18, the acetyltransferase SAT19, and the Cys6-type zinc finger SAT20, the latter being probably involved in regulation of SC3 expression. In Stachybotrys chartarum (strain CBS 109288 / IBT 7711) (Toxic black mold), this protein is Putative O-acetyltransferase SAT14.